Consider the following 125-residue polypeptide: MPTINQLIRKPRQAPVEKSKVPALKACPQRRGVCTRVYTTTPKKPNSALRKVCKVKLTSGFEVISYIGGEGHNLQEHSVVLVRGGRVKDLPGVRYHTVRGSLDTAGVKDRKQSRSKYGAKRPKKA.

Aspartate 89 is modified (3-methylthioaspartic acid). The interval 101 to 125 (SLDTAGVKDRKQSRSKYGAKRPKKA) is disordered. Residues 113–125 (SRSKYGAKRPKKA) show a composition bias toward basic residues.

This sequence belongs to the universal ribosomal protein uS12 family. Part of the 30S ribosomal subunit. Contacts proteins S8 and S17. May interact with IF1 in the 30S initiation complex.

Its function is as follows. With S4 and S5 plays an important role in translational accuracy. Functionally, interacts with and stabilizes bases of the 16S rRNA that are involved in tRNA selection in the A site and with the mRNA backbone. Located at the interface of the 30S and 50S subunits, it traverses the body of the 30S subunit contacting proteins on the other side and probably holding the rRNA structure together. The combined cluster of proteins S8, S12 and S17 appears to hold together the shoulder and platform of the 30S subunit. The polypeptide is Small ribosomal subunit protein uS12 (Thiobacillus denitrificans (strain ATCC 25259 / T1)).